A 113-amino-acid chain; its full sequence is Gamma-glutamylcyclotransferase family protein YtfP (113 aa).

It belongs to the gamma-glutamylcyclotransferase family.

The protein is Gamma-glutamylcyclotransferase family protein YtfP (ytfP) of Escherichia coli O157:H7.